Consider the following 314-residue polypeptide: uncharacterized protein (314 aa).

A mitochondrion-targeting transit peptide spans 1–29 (MMRLIRTLPLRCFKTRIRRQGSLLCLRCF). The disordered stretch occupies residues 52–74 (SSSPLSKNKEKQEKPEKENEGKH). Residues 58 to 74 (KNKEKQEKPEKENEGKH) show a composition bias toward basic and acidic residues. The stretch at 177 to 207 (LNEHHLQLLKLKRELNSIHDELNEIIIDLLQ) forms a coiled coil. The helical transmembrane segment at 262 to 279 (GLLVILVLVCSIMIGVSA) threads the bilayer. The disordered stretch occupies residues 281 to 314 (KKERPGLQEPEEPEILAPKEDIDTTFPQDQHDID).

It localises to the mitochondrion membrane. This is an uncharacterized protein from Saccharomyces cerevisiae (strain ATCC 204508 / S288c) (Baker's yeast).